A 152-amino-acid polypeptide reads, in one-letter code: Large ribosomal subunit protein bL9 (152 aa).

Belongs to the bacterial ribosomal protein bL9 family.

Functionally, binds to the 23S rRNA. The chain is Large ribosomal subunit protein bL9 from Synechocystis sp. (strain ATCC 27184 / PCC 6803 / Kazusa).